The chain runs to 88 residues: UPF0297 protein SAK_2030 (88 aa).

The protein belongs to the UPF0297 family.

The sequence is that of UPF0297 protein SAK_2030 from Streptococcus agalactiae serotype Ia (strain ATCC 27591 / A909 / CDC SS700).